The sequence spans 372 residues: DNA replication and repair protein RecF (372 aa).

30-37 (GENGQGKT) provides a ligand contact to ATP.

The protein belongs to the RecF family.

It is found in the cytoplasm. The RecF protein is involved in DNA metabolism; it is required for DNA replication and normal SOS inducibility. RecF binds preferentially to single-stranded, linear DNA. It also seems to bind ATP. This chain is DNA replication and repair protein RecF, found in Anaeromyxobacter dehalogenans (strain 2CP-C).